A 134-amino-acid chain; its full sequence is MAGHPKEKVIPDEVHQNQILRELYLKELRTQKLYTQYHVNPLRKIHTVTRKPMSWHDNLEEPADARFLNLIHHAAQGPRKKYPETQTENQEVGWDLEPLINPERHDRRLNHFRVCSDITLYKAKTWGLGDDHHK.

The disordered stretch occupies residues Gln-76 to Asp-95.

It belongs to the CFAP144 family. In terms of assembly, microtubule inner protein component of sperm flagellar doublet microtubules.

The protein resides in the cytoplasm. The protein localises to the cytoskeleton. Its subcellular location is the cilium axoneme. It is found in the flagellum axoneme. Microtubule inner protein (MIP) part of the dynein-decorated doublet microtubules (DMTs) in cilia axoneme, which is required for motile cilia beating. In Homo sapiens (Human), this protein is Cilia- and flagella-associated protein 144.